The chain runs to 220 residues: 1-Cys peroxiredoxin A (220 aa).

The Thioredoxin domain occupies 4 to 165 (LTIGDTVPNL…VVRAVDALQT (162 aa)). C46 serves as the catalytic Cysteine sulfenic acid (-SOH) intermediate. A Bipartite nuclear localization signal motif is present at residues 195–218 (KEKFPQGFDTADLPSGKGYLRFTK).

Belongs to the peroxiredoxin family. Prx6 subfamily.

It is found in the nucleus. The protein resides in the cytoplasm. It catalyses the reaction a hydroperoxide + [thioredoxin]-dithiol = an alcohol + [thioredoxin]-disulfide + H2O. Its function is as follows. Thiol-specific peroxidase that catalyzes the reduction of hydrogen peroxide and organic hydroperoxides to water and alcohols, respectively. Seems to contribute to the inhibition of germination during stress. This chain is 1-Cys peroxiredoxin A, found in Oryza sativa subsp. japonica (Rice).